The sequence spans 336 residues: Dihydroorotate dehydrogenase (quinone) (336 aa).

Residues 62 to 66 and T86 each bind FMN; that span reads AGLDK. Residue K66 participates in substrate binding. 111 to 115 contacts substrate; sequence NRMGF. FMN contacts are provided by N139 and N172. N172 provides a ligand contact to substrate. The active-site Nucleophile is S175. N177 contributes to the substrate binding site. K217 and T245 together coordinate FMN. Substrate is bound at residue 246–247; sequence NT. FMN contacts are provided by residues G268, G297, and 318–319; that span reads YS.

The protein belongs to the dihydroorotate dehydrogenase family. Type 2 subfamily. Monomer. It depends on FMN as a cofactor.

Its subcellular location is the cell membrane. The enzyme catalyses (S)-dihydroorotate + a quinone = orotate + a quinol. It participates in pyrimidine metabolism; UMP biosynthesis via de novo pathway; orotate from (S)-dihydroorotate (quinone route): step 1/1. Catalyzes the conversion of dihydroorotate to orotate with quinone as electron acceptor. The chain is Dihydroorotate dehydrogenase (quinone) from Salmonella gallinarum (strain 287/91 / NCTC 13346).